Here is a 285-residue protein sequence, read N- to C-terminus: Sulfotransferase 2A1 (285 aa).

Residues Lys44, Ser45, Gly46, Thr47, Asn48, and Trp49 each contribute to the 3'-phosphoadenylyl sulfate site. Residue His99 is the Proton acceptor of the active site. The 3'-phosphoadenylyl sulfate site is built by Arg121, Ser129, Tyr184, Ser218, Met223, Arg247, Lys248, and Gly249. A Phosphoserine modification is found at Ser251.

It belongs to the sulfotransferase 1 family. As to quaternary structure, homodimer. Predominanly expressed in liver. Detected also in adrenal gland and in jejunum.

The protein resides in the cytoplasm. The protein localises to the cytosol. It carries out the reaction an alcohol + 3'-phosphoadenylyl sulfate = an alkyl sulfate + adenosine 3',5'-bisphosphate + H(+). The catalysed reaction is 3beta-hydroxyandrost-5-en-17-one + 3'-phosphoadenylyl sulfate = dehydroepiandrosterone 3-sulfate + adenosine 3',5'-bisphosphate + H(+). It catalyses the reaction taurolithocholate + 3'-phosphoadenylyl sulfate = taurolithocholate 3-sulfate + adenosine 3',5'-bisphosphate + H(+). The enzyme catalyses lithocholate + 3'-phosphoadenylyl sulfate = lithocholate sulfate + adenosine 3',5'-bisphosphate + H(+). It carries out the reaction (24S)-hydroxycholesterol + 3'-phosphoadenylyl sulfate = (24S)-hydroxycholesterol 24-sulfate + adenosine 3',5'-bisphosphate + H(+). The catalysed reaction is (24S)-hydroxycholesterol + 3'-phosphoadenylyl sulfate = (24S)-hydroxycholesterol 3-sulfate + adenosine 3',5'-bisphosphate + H(+). It catalyses the reaction (24S)-hydroxycholesterol 24-sulfate + 3'-phosphoadenylyl sulfate = (24S)-hydroxycholesterol 3,24-disulfate + adenosine 3',5'-bisphosphate + H(+). The enzyme catalyses pregnenolone + 3'-phosphoadenylyl sulfate = pregnenolone sulfate + adenosine 3',5'-bisphosphate + H(+). It carries out the reaction androsterone + 3'-phosphoadenylyl sulfate = androsterone 3alpha-sulfate + adenosine 3',5'-bisphosphate + H(+). In terms of biological role, sulfotransferase that utilizes 3'-phospho-5'-adenylyl sulfate (PAPS) as sulfonate donor to catalyze the sulfonation of steroids and bile acids in the liver and adrenal glands. Mediates the sulfation of a wide range of steroids and sterols, including pregnenolone, androsterone, DHEA, bile acids, cholesterol and as well many xenobiotics that contain alcohol and phenol functional groups. Sulfonation increases the water solubility of most compounds, and therefore their renal excretion, but it can also result in bioactivation to form active metabolites. Plays an important role in maintening steroid and lipid homeostasis. Plays a key role in bile acid metabolism. In addition, catalyzes the metabolic activation of potent carcinogenic polycyclic arylmethanols. This is Sulfotransferase 2A1 (SULT2A1) from Macaca fascicularis (Crab-eating macaque).